Reading from the N-terminus, the 160-residue chain is Large ribosomal subunit protein uL10 (160 aa).

Belongs to the universal ribosomal protein uL10 family. Part of the ribosomal stalk of the 50S ribosomal subunit. The N-terminus interacts with L11 and the large rRNA to form the base of the stalk. The C-terminus forms an elongated spine to which L12 dimers bind in a sequential fashion forming a multimeric L10(L12)X complex.

Functionally, forms part of the ribosomal stalk, playing a central role in the interaction of the ribosome with GTP-bound translation factors. The protein is Large ribosomal subunit protein uL10 of Ehrlichia canis (strain Jake).